The chain runs to 351 residues: MALWYLFNKRSLGAAVLILVGLLMCNIQITGAQSNIGVCYGEIANNLPSEQDVINLYKANGIRKMRIYYPDTNIFKALNGSNIEIILEVPNQDLEALANSSIANGWVQDNIRSHFPYVKFKYISIGNEVSPTNNGQYSQFLLHAMKNVYNALAAAGLQDKIKVSTATYSGLLANTYPPKDSIFREELKSFINPIIEFLARNNLPLLANIYPYFGHIYNTVDVPLSYALFNQQETNSTGYQNLFDALLDSIYFAVEKAGGPNVEIIVSESGWPSEGNSAATIENAQTYYRNLVNHVKGGAGTPKKPGRIIETYLFAMFDENEKQGEITEKHFGLFYPNRAAKYQLNFMYSDS.

Residues 1–32 (MALWYLFNKRSLGAAVLILVGLLMCNIQITGA) form the signal peptide. Gln33 carries the pyrrolidone carboxylic acid modification. N-linked (GlcNAc...) asparagine glycans are attached at residues Asn79 and Asn99. Residue Glu128 is the Proton donor of the active site. Asn235 is a glycosylation site (N-linked (GlcNAc...) asparagine). Glu268 serves as the catalytic Nucleophile.

The protein belongs to the glycosyl hydrolase 17 family. Post-translationally, glycosylated. In terms of processing, the N-terminus is blocked.

It localises to the secreted. It is found in the extracellular space. The protein localises to the extracellular matrix. The enzyme catalyses Hydrolysis of (1-&gt;3)-beta-D-glucosidic linkages in (1-&gt;3)-beta-D-glucans.. Functionally, implicated in the defense of plants against pathogens. The sequence is that of Glucan endo-1,3-beta-glucosidase (SP41B) from Nicotiana tabacum (Common tobacco).